Consider the following 151-residue polypeptide: Deoxyuridine 5'-triphosphate nucleotidohydrolase (151 aa).

Substrate contacts are provided by residues 70 to 72, N83, 87 to 89, and M97; these read RSG and LID.

It belongs to the dUTPase family. Requires Mg(2+) as cofactor.

The catalysed reaction is dUTP + H2O = dUMP + diphosphate + H(+). Its pathway is pyrimidine metabolism; dUMP biosynthesis; dUMP from dCTP (dUTP route): step 2/2. Its function is as follows. This enzyme is involved in nucleotide metabolism: it produces dUMP, the immediate precursor of thymidine nucleotides and it decreases the intracellular concentration of dUTP so that uracil cannot be incorporated into DNA. The polypeptide is Deoxyuridine 5'-triphosphate nucleotidohydrolase (Glaesserella parasuis serovar 5 (strain SH0165) (Haemophilus parasuis)).